Here is a 51-residue protein sequence, read N- to C-terminus: Small integral membrane protein 38 (51 aa).

A helical membrane pass occupies residues Pro13–Gly33.

It localises to the membrane. The polypeptide is Small integral membrane protein 38 (Homo sapiens (Human)).